The chain runs to 750 residues: Photosystem I P700 chlorophyll a apoprotein A1 (750 aa).

8 helical membrane passes run 70 to 93, 156 to 179, 195 to 219, 291 to 309, 346 to 369, 385 to 411, 433 to 455, and 531 to 549; these read VFSA…FHGA, LYCT…FHYH, LNHH…HVSL, IAHH…GHMY, WHAQ…HHMY, LSLF…IFMV, AIIS…LYIH, and FLVH…LILL. 2 residues coordinate [4Fe-4S] cluster: C573 and C582. Helical transmembrane passes span 589-610 and 664-686; these read HVFL…HFSW and LSAY…MFLF. A chlorophyll a'-binding site is contributed by H675. M683 and Y691 together coordinate chlorophyll a. W692 serves as a coordination point for phylloquinone. A helical membrane pass occupies residues 724 to 744; the sequence is AVGVTHYLLGGIATTWAFFLA.

The protein belongs to the PsaA/PsaB family. As to quaternary structure, the PsaA/B heterodimer binds the P700 chlorophyll special pair and subsequent electron acceptors. PSI consists of a core antenna complex that captures photons, and an electron transfer chain that converts photonic excitation into a charge separation. The eukaryotic PSI reaction center is composed of at least 11 subunits. The cofactor is P700 is a chlorophyll a/chlorophyll a' dimer, A0 is one or more chlorophyll a, A1 is one or both phylloquinones and FX is a shared 4Fe-4S iron-sulfur center..

It is found in the plastid. The protein localises to the chloroplast thylakoid membrane. It carries out the reaction reduced [plastocyanin] + hnu + oxidized [2Fe-2S]-[ferredoxin] = oxidized [plastocyanin] + reduced [2Fe-2S]-[ferredoxin]. Its function is as follows. PsaA and PsaB bind P700, the primary electron donor of photosystem I (PSI), as well as the electron acceptors A0, A1 and FX. PSI is a plastocyanin-ferredoxin oxidoreductase, converting photonic excitation into a charge separation, which transfers an electron from the donor P700 chlorophyll pair to the spectroscopically characterized acceptors A0, A1, FX, FA and FB in turn. Oxidized P700 is reduced on the lumenal side of the thylakoid membrane by plastocyanin. The chain is Photosystem I P700 chlorophyll a apoprotein A1 from Amborella trichopoda.